A 144-amino-acid chain; its full sequence is Large ribosomal subunit protein uL13 (144 aa).

The protein belongs to the universal ribosomal protein uL13 family. Part of the 50S ribosomal subunit.

Functionally, this protein is one of the early assembly proteins of the 50S ribosomal subunit, although it is not seen to bind rRNA by itself. It is important during the early stages of 50S assembly. The chain is Large ribosomal subunit protein uL13 from Blochmanniella pennsylvanica (strain BPEN).